Consider the following 878-residue polypeptide: Leucine--tRNA ligase (878 aa).

The 'HIGH' region signature appears at 43–53; it reads PYPSGRIHMGH. The 'KMSKS' region motif lies at 630–634; the sequence is KMSKS. Residue Lys-633 participates in ATP binding.

This sequence belongs to the class-I aminoacyl-tRNA synthetase family.

It localises to the cytoplasm. It catalyses the reaction tRNA(Leu) + L-leucine + ATP = L-leucyl-tRNA(Leu) + AMP + diphosphate. This chain is Leucine--tRNA ligase, found in Rhodopseudomonas palustris (strain BisB5).